Consider the following 121-residue polypeptide: NADH-quinone oxidoreductase subunit 7 (121 aa).

Transmembrane regions (helical) follow at residues 11–31 (ILVF…AAAV), 65–85 (LVSI…PWAV), and 93–113 (VAFW…AYEW).

Belongs to the complex I subunit 3 family. In terms of assembly, NDH-1 is composed of at least 14 different subunits, Nqo1 to Nqo14. The complex has a L-shaped structure, with the hydrophobic arm (subunits Nqo7, Nqo8, Nqo10 to Nqo14) embedded in the inner membrane and the hydrophilic peripheral arm (subunits Nqo1 to Nqo6, Nqo9) protruding into the bacterial cytoplasm. The hydrophilic domain contains all the redox centers.

The protein resides in the cell inner membrane. The enzyme catalyses a quinone + NADH + 5 H(+)(in) = a quinol + NAD(+) + 4 H(+)(out). In terms of biological role, NDH-1 shuttles electrons from NADH, via FMN and iron-sulfur (Fe-S) centers, to quinones in the respiratory chain. The immediate electron acceptor for the enzyme in this species is believed to be ubiquinone. Couples the redox reaction to proton translocation (for every two electrons transferred, four hydrogen ions are translocated across the cytoplasmic membrane), and thus conserves the redox energy in a proton gradient. The protein is NADH-quinone oxidoreductase subunit 7 (nqo7) of Paracoccus denitrificans.